A 440-amino-acid polypeptide reads, in one-letter code: MTLNEKKSINECDLKGKKVLIRVDFNVPVKNGKITNDYRIRSALPTLKKVLTEGGSCVLMSHLGRPKGIPMAQAGKIRSTGGVPGFQQKATLKPVAKALSELLLRPVTFAPDCLNAADVVSKMSPGDVVLLENVRFYKEEGSKKAKDREAMAKILASYGDVYISDAFGTAHRDSATMTGIPKILGNGAAGYLMEKEISYFAKVLGNPPRPLVAIVGGAKVSDKIQLLDNMLQRIDYLLIGGAMAYTFLKAQGYSIGKSKCEESKLEFARSLLKKAEDRKVQVILPIDHVCHTEFKAVDSPLITEDQNIPEGHMALDIGPKTIEKYVQTIGKCKSAIWNGPMGVFEMVPYSKGTFAIAKAMGRGTHEHGLMSIIGGGDSASAAELSGEAKRMSHVSTGGGASLELLEGKTLPGVTVLDEKSAVVSYASAGTGTLSNRWSSL.

Positions 23, 24, 25, 26, 39, 61, 62, 64, 65, 135, 171, and 172 each coordinate (2R)-3-phosphoglycerate. G217 serves as a coordination point for CDP. Position 218 (A218) interacts with ADP. Positions 218 and 219 each coordinate AMP. A218 provides a ligand contact to ATP. A218 provides a ligand contact to Mg(2+). K219 serves as a coordination point for (2R)-3-phosphoglycerate. CDP is bound at residue D222. D222 lines the Mg(2+) pocket. 2 residues coordinate ADP: K223 and G241. AMP is bound at residue K223. A CDP-binding site is contributed by G241. 2 residues coordinate AMP: A242 and A314. Positions 242 and 314 each coordinate ATP. A314 and N338 together coordinate ADP. 2 residues coordinate CDP: G339 and F344. Residues F344, E345, D377, and S378 each contribute to the ADP site. E345 contributes to the AMP binding site. Residues D377 and S378 each contribute to the ATP site. Residue D377 coordinates Mg(2+).

The protein belongs to the phosphoglycerate kinase family. In terms of assembly, monomer. The cofactor is Mg(2+).

The protein resides in the glycosome. The catalysed reaction is (2R)-3-phosphoglycerate + ATP = (2R)-3-phospho-glyceroyl phosphate + ADP. The protein operates within carbohydrate degradation; glycolysis; pyruvate from D-glyceraldehyde 3-phosphate: step 2/5. This chain is Phosphoglycerate kinase, glycosomal, found in Trypanosoma brucei brucei.